Here is a 469-residue protein sequence, read N- to C-terminus: Reticulon-2 (469 aa).

Disordered stretches follow at residues 1-180 (MGQV…EASE) and 201-238 (LTPQ…NGEG). Positions 14 to 25 (APSTASSTPDST) are enriched in low complexity. Residues 32-43 (SDFRELHTAREF) show a composition bias toward basic and acidic residues. Position 44 is a phosphoserine (serine 44). The span at 135–144 (RPLEELRLRL) shows a compositional bias: basic and acidic residues. Composition is skewed to polar residues over residues 159 to 168 (DSATSSSTPL) and 203 to 226 (PQLS…QDLN). The Reticulon domain occupies 270–469 (VADLLYWKDT…SVSGSKAKAE (200 aa)). 2 consecutive transmembrane segments (helical) span residues 293–313 (LLCL…LLGL) and 388–408 (LLFY…LVIL).

As to quaternary structure, interacts with SPAST. Interacts with BACE1. Interacts (via first transmembrane domain) with ARL6IP5/GTRAP3-18. Interacts (via N-terminus) with SLC1A1/EAAC1; the interaction promotes cell surface expression of SLC1A1. Expressed in brain and spinal cord (at protein level). In the embryonic brain cortex, expressed in neurons but not in astrocytes (at protein level).

It localises to the endoplasmic reticulum membrane. Its subcellular location is the sarcoplasmic reticulum membrane. The protein resides in the cell membrane. It is found in the sarcolemma. The protein localises to the T-tubule. It localises to the cytoplasm. Its subcellular location is the myofibril. The protein resides in the sarcomere. It is found in the z line. The protein localises to the cytoskeleton. Inhibits amyloid precursor protein processing, probably by blocking BACE1 activity. Enhances trafficking of the glutamate transporter SLC1A1/EAAC1 from the endoplasmic reticulum to the cell surface. Plays a role in the translocation of SLC2A4/GLUT4 from intracellular membranes to the cell membrane which facilitates the uptake of glucose into the cell. This Rattus norvegicus (Rat) protein is Reticulon-2.